We begin with the raw amino-acid sequence, 389 residues long: Phospho-N-acetylmuramoyl-pentapeptide-transferase (389 aa).

Transmembrane regions (helical) follow at residues 25-45 (RAVAATITALLIGLVCGPWVI), 73-93 (TMGGVLILIGIAVSTLLWADL), 97-117 (FIWIVMLVTFGFGVIGWVDDY), 135-155 (FWQSLIGLFAAVYLAFSVSEA), 189-209 (SMTYPLGVWGFIALTYLVIVG), 222-242 (GLVIMPVVLVGSSLGVFAYVM), 259-279 (AGEMLIFCSAMGGAGLAFLWF), 286-306 (VFMGDVGALALGGALGTIAVI), 311-331 (IVLFIMGGIFVAETVSVMLQV), and 366-386 (QVVVRFWIITLMLCLFGLSTL).

This sequence belongs to the glycosyltransferase 4 family. MraY subfamily. Mg(2+) is required as a cofactor.

It localises to the cell inner membrane. The catalysed reaction is UDP-N-acetyl-alpha-D-muramoyl-L-alanyl-gamma-D-glutamyl-meso-2,6-diaminopimeloyl-D-alanyl-D-alanine + di-trans,octa-cis-undecaprenyl phosphate = di-trans,octa-cis-undecaprenyl diphospho-N-acetyl-alpha-D-muramoyl-L-alanyl-D-glutamyl-meso-2,6-diaminopimeloyl-D-alanyl-D-alanine + UMP. It functions in the pathway cell wall biogenesis; peptidoglycan biosynthesis. Catalyzes the initial step of the lipid cycle reactions in the biosynthesis of the cell wall peptidoglycan: transfers peptidoglycan precursor phospho-MurNAc-pentapeptide from UDP-MurNAc-pentapeptide onto the lipid carrier undecaprenyl phosphate, yielding undecaprenyl-pyrophosphoryl-MurNAc-pentapeptide, known as lipid I. The polypeptide is Phospho-N-acetylmuramoyl-pentapeptide-transferase (Paraburkholderia phymatum (strain DSM 17167 / CIP 108236 / LMG 21445 / STM815) (Burkholderia phymatum)).